The sequence spans 304 residues: Porphobilinogen deaminase (304 aa).

An S-(dipyrrolylmethanemethyl)cysteine modification is found at cysteine 240.

Belongs to the HMBS family. As to quaternary structure, monomer. Requires dipyrromethane as cofactor.

It carries out the reaction 4 porphobilinogen + H2O = hydroxymethylbilane + 4 NH4(+). Its pathway is porphyrin-containing compound metabolism; protoporphyrin-IX biosynthesis; coproporphyrinogen-III from 5-aminolevulinate: step 2/4. Functionally, tetrapolymerization of the monopyrrole PBG into the hydroxymethylbilane pre-uroporphyrinogen in several discrete steps. This chain is Porphobilinogen deaminase, found in Xanthomonas oryzae pv. oryzae (strain MAFF 311018).